The primary structure comprises 281 residues: L-cysteine S-thiosulfotransferase subunit SoxA (281 aa).

The signal sequence occupies residues 1-25; that stretch reads MTKHGFLLATLVLAGATLPIGPVTA. C99 and C130 are joined by a disulfide. In terms of domain architecture, Cytochrome c spans 175–281; that stretch reads AAYEQGKRFY…LELNGPGARK (107 aa). Residues C195 and H199 each contribute to the heme site. Residue R238 coordinates substrate. C242 contacts heme. C242 acts as the Cysteine persulfide intermediate in catalysis.

It belongs to the SoxA family. Heterodimer of SoxA and SoxX. Heme is required as a cofactor. Cysteine persulfide at Cys-242.

Its subcellular location is the periplasm. It catalyses the reaction L-cysteinyl-[SoxY protein] + thiosulfate + 2 Fe(III)-[cytochrome c] = S-sulfosulfanyl-L-cysteinyl-[SoxY protein] + 2 Fe(II)-[cytochrome c] + 2 H(+). It carries out the reaction S-sulfanyl-L-cysteinyl-[SoxY protein] + thiosulfate + 2 Fe(III)-[cytochrome c] = S-(2-sulfodisulfanyl)-L-cysteinyl-[SoxY protein] + 2 Fe(II)-[cytochrome c] + 2 H(+). C-type monoheme cytochrome, which is part of the SoxAX cytochrome complex involved in sulfur oxidation. The SoxAX complex catalyzes the formation of a heterodisulfide bond between the conserved cysteine residue on a sulfur carrier SoxYZ complex subunit SoxY and thiosulfate or other inorganic sulfur substrates. This leads to the intermediary formation of conspicuous sulfur globules inside of the cells. The protein is L-cysteine S-thiosulfotransferase subunit SoxA of Allochromatium vinosum (Chromatium vinosum).